The following is a 119-amino-acid chain: Large ribosomal subunit protein bL20 (119 aa).

Belongs to the bacterial ribosomal protein bL20 family.

Functionally, binds directly to 23S ribosomal RNA and is necessary for the in vitro assembly process of the 50S ribosomal subunit. It is not involved in the protein synthesizing functions of that subunit. In Bradyrhizobium diazoefficiens (strain JCM 10833 / BCRC 13528 / IAM 13628 / NBRC 14792 / USDA 110), this protein is Large ribosomal subunit protein bL20.